The primary structure comprises 226 residues: Urease accessory protein UreF (226 aa).

It belongs to the UreF family. In terms of assembly, ureD, UreF and UreG form a complex that acts as a GTP-hydrolysis-dependent molecular chaperone, activating the urease apoprotein by helping to assemble the nickel containing metallocenter of UreC. The UreE protein probably delivers the nickel.

It is found in the cytoplasm. Its function is as follows. Required for maturation of urease via the functional incorporation of the urease nickel metallocenter. This is Urease accessory protein UreF from Burkholderia ambifaria (strain ATCC BAA-244 / DSM 16087 / CCUG 44356 / LMG 19182 / AMMD) (Burkholderia cepacia (strain AMMD)).